The sequence spans 611 residues: Leukotriene A-4 hydrolase (611 aa).

K73 is modified (N6-acetyllysine). A peptide is bound by residues 135–137 (QCQ) and 267–272 (PYGGME). Zn(2+) is bound at residue H296. The Proton acceptor role is filled by E297. The Zn(2+) site is built by H300 and E319. K337 is modified (N6-acetyllysine). Y384 serves as the catalytic Proton donor. Residue S416 is modified to Phosphoserine. An a peptide-binding site is contributed by 564–566 (RMK). Residue K573 is modified to N6-acetyllysine.

Belongs to the peptidase M1 family. Requires Zn(2+) as cofactor. Phosphorylation at Ser-416 inhibits enzymatic activity.

Its subcellular location is the cytoplasm. It catalyses the reaction leukotriene A4 + H2O = leukotriene B4. Its pathway is lipid metabolism; leukotriene B4 biosynthesis. With respect to regulation, inhibited by bestatin. Subject to suicide inhibition by leukotriene A4. Functionally, epoxide hydrolase that catalyzes the final step in the biosynthesis of the pro-inflammatory mediator leukotriene B4. Also has aminopeptidase activity. This Chinchilla lanigera (Long-tailed chinchilla) protein is Leukotriene A-4 hydrolase (LTA4H).